We begin with the raw amino-acid sequence, 387 residues long: Protein kinase gsk3 (387 aa).

The Protein kinase domain maps to 32-316 (YTSSKVVGSG…AAEAMCHPFF (285 aa)). Residues 38-46 (VGSGSFGVV) and K61 each bind ATP. The Proton acceptor role is filled by D157. Residue S191 is modified to Phosphoserine. The residue at position 192 (Y192) is a Phosphotyrosine; by autocatalysis. S335 is modified (phosphoserine).

The protein belongs to the protein kinase superfamily. CMGC Ser/Thr protein kinase family. GSK-3 subfamily. In terms of processing, autophosphorylated on tyrosine residues.

Its subcellular location is the cytoplasm. The protein localises to the nucleus. It catalyses the reaction L-seryl-[protein] + ATP = O-phospho-L-seryl-[protein] + ADP + H(+). The catalysed reaction is L-threonyl-[protein] + ATP = O-phospho-L-threonyl-[protein] + ADP + H(+). In terms of biological role, interacts with cdc14 which is thought to play a role in the initiation and completion of mitosis. Involved in the positive regulation of mis12. The polypeptide is Protein kinase gsk3 (gsk3) (Schizosaccharomyces pombe (strain 972 / ATCC 24843) (Fission yeast)).